The following is a 296-amino-acid chain: ATP synthase gamma chain (296 aa).

This sequence belongs to the ATPase gamma chain family. As to quaternary structure, F-type ATPases have 2 components, CF(1) - the catalytic core - and CF(0) - the membrane proton channel. CF(1) has five subunits: alpha(3), beta(3), gamma(1), delta(1), epsilon(1). CF(0) has three main subunits: a, b and c.

It is found in the cell inner membrane. Its function is as follows. Produces ATP from ADP in the presence of a proton gradient across the membrane. The gamma chain is believed to be important in regulating ATPase activity and the flow of protons through the CF(0) complex. The chain is ATP synthase gamma chain from Rhodopirellula baltica (strain DSM 10527 / NCIMB 13988 / SH1).